The primary structure comprises 515 residues: Signal transduction histidine-protein kinase/phosphatase MprB (515 aa).

Topologically, residues 1-24 (MTLPPQPSRLKPPRNTSSLSLRWR) are cytoplasmic. The helical transmembrane segment at 25–45 (VMLLAMSMVAMVVVLMSVAVY) threads the bilayer. Residues 46–165 (AVVSRALYDD…TGQVLGRLGT (120 aa)) are Extracellular-facing. Residues 166-186 (VLLIVGGVGVAVAAIAGGMVA) traverse the membrane as a helical segment. The 53-residue stretch at 187 to 239 (RAGLRPVGRLTQAAERVARTDDLRPIPVFGSDELARLTEAFNMMLRALTESRE) folds into the HAMP domain. At 187 to 515 (RAGLRPVGRL…GKSRSASKEL (329 aa)) the chain is on the cytoplasmic side. A Histidine kinase domain is found at 247–467 (DAGHELRTPL…SFYVMLPGRP (221 aa)). His-250 is subject to Phosphohistidine; by autocatalysis. Positions 468–515 (LTPGGNGTAPVPAAQFDPDMRSAGSRADRRVIKNTETNGKSRSASKEL) are disordered.

It depends on Mg(2+) as a cofactor. Requires Mn(2+) as cofactor. In terms of processing, autophosphorylated.

The protein localises to the cell membrane. The catalysed reaction is ATP + protein L-histidine = ADP + protein N-phospho-L-histidine.. Its function is as follows. Member of the two-component regulatory system MprB/MprA which contributes to maintaining a balance among several systems involved in stress resistance and is required for establishment and maintenance of persistent infection in the host. In response to environmental signals MprB acts both as a membrane-associated protein kinase that undergoes autophosphorylation and subsequently transfers the phosphate to MprA, and a protein phosphatase that dephosphorylates phospho-MprA. The chain is Signal transduction histidine-protein kinase/phosphatase MprB (mprB) from Mycobacterium sp. (strain JLS).